A 250-amino-acid polypeptide reads, in one-letter code: Probable transcriptional regulatory protein PERMA_0079 (250 aa).

The protein belongs to the TACO1 family.

It is found in the cytoplasm. This Persephonella marina (strain DSM 14350 / EX-H1) protein is Probable transcriptional regulatory protein PERMA_0079.